The primary structure comprises 398 residues: 1-deoxy-D-xylulose 5-phosphate reductoisomerase (398 aa).

Positions 11, 12, 13, 14, and 125 each coordinate NADPH. 1-deoxy-D-xylulose 5-phosphate is bound at residue K126. Residue E127 participates in NADPH binding. D151 provides a ligand contact to Mn(2+). 1-deoxy-D-xylulose 5-phosphate is bound by residues S152, E153, S186, and H209. Residue E153 participates in Mn(2+) binding. NADPH is bound at residue G215. 1-deoxy-D-xylulose 5-phosphate-binding residues include S222, N227, K228, and E231. Residue E231 coordinates Mn(2+).

It belongs to the DXR family. Requires Mg(2+) as cofactor. Mn(2+) is required as a cofactor.

The catalysed reaction is 2-C-methyl-D-erythritol 4-phosphate + NADP(+) = 1-deoxy-D-xylulose 5-phosphate + NADPH + H(+). It functions in the pathway isoprenoid biosynthesis; isopentenyl diphosphate biosynthesis via DXP pathway; isopentenyl diphosphate from 1-deoxy-D-xylulose 5-phosphate: step 1/6. Its function is as follows. Catalyzes the NADPH-dependent rearrangement and reduction of 1-deoxy-D-xylulose-5-phosphate (DXP) to 2-C-methyl-D-erythritol 4-phosphate (MEP). The chain is 1-deoxy-D-xylulose 5-phosphate reductoisomerase from Acinetobacter baumannii (strain ACICU).